Here is a 445-residue protein sequence, read N- to C-terminus: 3-phosphoshikimate 1-carboxyvinyltransferase (445 aa).

The segment at 1–25 (MSHSDQTSPLEARKSAALSGTARVP) is disordered. The 3-phosphoshikimate site is built by Lys-28, Ser-29, and Arg-33. Lys-28 contacts phosphoenolpyruvate. Phosphoenolpyruvate is bound by residues Gly-101 and Arg-129. 3-phosphoshikimate-binding residues include Ser-175, Gln-177, Asp-328, and Lys-355. Gln-177 contacts phosphoenolpyruvate. Asp-328 serves as the catalytic Proton acceptor. Arg-359 and Arg-402 together coordinate phosphoenolpyruvate.

This sequence belongs to the EPSP synthase family. In terms of assembly, monomer.

The protein resides in the cytoplasm. The enzyme catalyses 3-phosphoshikimate + phosphoenolpyruvate = 5-O-(1-carboxyvinyl)-3-phosphoshikimate + phosphate. It participates in metabolic intermediate biosynthesis; chorismate biosynthesis; chorismate from D-erythrose 4-phosphate and phosphoenolpyruvate: step 6/7. Its function is as follows. Catalyzes the transfer of the enolpyruvyl moiety of phosphoenolpyruvate (PEP) to the 5-hydroxyl of shikimate-3-phosphate (S3P) to produce enolpyruvyl shikimate-3-phosphate and inorganic phosphate. The protein is 3-phosphoshikimate 1-carboxyvinyltransferase of Rhodopseudomonas palustris (strain BisB5).